We begin with the raw amino-acid sequence, 421 residues long: Phosphoribosylamine--glycine ligase (421 aa).

In terms of domain architecture, ATP-grasp spans 108–314 (KEIMVKYNVP…FAQNIDDIMM (207 aa)). 134 to 195 (IEEQGAPIVV…EEFLDGEEFS (62 aa)) contributes to the ATP binding site. The Mg(2+) site is built by Glu284 and Asn286.

Belongs to the GARS family. It depends on Mg(2+) as a cofactor. The cofactor is Mn(2+).

The catalysed reaction is 5-phospho-beta-D-ribosylamine + glycine + ATP = N(1)-(5-phospho-beta-D-ribosyl)glycinamide + ADP + phosphate + H(+). Its pathway is purine metabolism; IMP biosynthesis via de novo pathway; N(1)-(5-phospho-D-ribosyl)glycinamide from 5-phospho-alpha-D-ribose 1-diphosphate: step 2/2. This chain is Phosphoribosylamine--glycine ligase, found in Streptococcus pyogenes serotype M3 (strain SSI-1).